The following is a 116-amino-acid chain: Large ribosomal subunit protein uL24 (116 aa).

The interval Met1–Gly27 is disordered.

Belongs to the universal ribosomal protein uL24 family. As to quaternary structure, part of the 50S ribosomal subunit.

In terms of biological role, one of two assembly initiator proteins, it binds directly to the 5'-end of the 23S rRNA, where it nucleates assembly of the 50S subunit. Functionally, one of the proteins that surrounds the polypeptide exit tunnel on the outside of the subunit. This Picosynechococcus sp. (strain ATCC 27264 / PCC 7002 / PR-6) (Agmenellum quadruplicatum) protein is Large ribosomal subunit protein uL24.